The following is a 678-amino-acid chain: Glycine--tRNA ligase beta subunit (678 aa).

Belongs to the class-II aminoacyl-tRNA synthetase family. As to quaternary structure, tetramer of two alpha and two beta subunits.

It is found in the cytoplasm. It catalyses the reaction tRNA(Gly) + glycine + ATP = glycyl-tRNA(Gly) + AMP + diphosphate. This is Glycine--tRNA ligase beta subunit from Streptococcus pneumoniae (strain Hungary19A-6).